Consider the following 82-residue polypeptide: Small ribosomal subunit protein uS12 (82 aa).

Asp59 bears the 3-methylthioaspartic acid mark.

This sequence belongs to the universal ribosomal protein uS12 family. As to quaternary structure, part of the 30S ribosomal subunit. Contacts proteins S8 and S17. May interact with IF1 in the 30S initiation complex.

Functionally, with S4 and S5 plays an important role in translational accuracy. Its function is as follows. Interacts with and stabilizes bases of the 16S rRNA that are involved in tRNA selection in the A site and with the mRNA backbone. Located at the interface of the 30S and 50S subunits, it traverses the body of the 30S subunit contacting proteins on the other side and probably holding the rRNA structure together. The combined cluster of proteins S8, S12 and S17 appears to hold together the shoulder and platform of the 30S subunit. This chain is Small ribosomal subunit protein uS12 (rpsL), found in Actinobacillus pleuropneumoniae (Haemophilus pleuropneumoniae).